A 474-amino-acid polypeptide reads, in one-letter code: Protein NAR1 (474 aa).

[4Fe-4S] cluster-binding residues include Cys-24, Cys-61, Cys-64, Cys-67, Cys-177, Cys-233, Cys-390, and Cys-394.

This sequence belongs to the NARF family. As to quaternary structure, part of a complex composed of AE7, CIA1, MMS19 and NAR1. Interacts with CIA1. In terms of tissue distribution, expressed in developing tissues, including shoot apex, young leaves, vascular tissues, root tips, pedicels, carpels and developing seeds.

The protein localises to the nucleus. The protein resides in the cytoplasm. Functionally, essential component of the cytosolic iron-sulfur (Fe-S) protein assembly (CIA) machinery. Required for the maturation of extramitochondrial Fe/S proteins. Required for expression of the imprinted FWA gene, for seed development and is involved in the oxidative stress response in vegetative tissues. Involved in the regulation of cell size, ploidy and cell cycle progression. Required for growth under normoxic conditions and necessary for recovery after hypoxic treatment but its action is reactive oxygen species (ROS) independent. This chain is Protein NAR1, found in Arabidopsis thaliana (Mouse-ear cress).